The sequence spans 142 residues: Nucleoside diphosphate kinase (142 aa).

Positions 11, 59, 87, 93, 104, and 114 each coordinate ATP. His117 serves as the catalytic Pros-phosphohistidine intermediate.

This sequence belongs to the NDK family. As to quaternary structure, homotetramer. The cofactor is Mg(2+).

The protein resides in the cytoplasm. The catalysed reaction is a 2'-deoxyribonucleoside 5'-diphosphate + ATP = a 2'-deoxyribonucleoside 5'-triphosphate + ADP. It catalyses the reaction a ribonucleoside 5'-diphosphate + ATP = a ribonucleoside 5'-triphosphate + ADP. Functionally, major role in the synthesis of nucleoside triphosphates other than ATP. The ATP gamma phosphate is transferred to the NDP beta phosphate via a ping-pong mechanism, using a phosphorylated active-site intermediate. This Salinibacter ruber (strain DSM 13855 / M31) protein is Nucleoside diphosphate kinase.